The following is a 180-amino-acid chain: Large ribosomal subunit protein uL6c (180 aa).

Belongs to the universal ribosomal protein uL6 family. In terms of assembly, part of the 50S ribosomal subunit.

The protein localises to the plastid. The protein resides in the chloroplast. In terms of biological role, binds 23S rRNA. This Pyropia yezoensis (Susabi-nori) protein is Large ribosomal subunit protein uL6c (rpl6).